The primary structure comprises 136 residues: Nodulation protein K (136 aa).

The chain is Nodulation protein K (nodK) from Bradyrhizobium sp. (strain ANU 289).